We begin with the raw amino-acid sequence, 71 residues long: Mitotic-spindle organizing protein 1 (71 aa).

It belongs to the MOZART1 family. In terms of assembly, part of the gamma-tubulin complex.

The protein resides in the cytoplasm. It localises to the cytoskeleton. Its subcellular location is the microtubule organizing center. It is found in the spindle pole body. In terms of biological role, required for gamma-tubulin complex recruitment to the microtubule organizing center (MTOC). This is Mitotic-spindle organizing protein 1 from Aspergillus clavatus (strain ATCC 1007 / CBS 513.65 / DSM 816 / NCTC 3887 / NRRL 1 / QM 1276 / 107).